Reading from the N-terminus, the 324-residue chain is Glutamyl-Q tRNA(Asp) synthetase (324 aa).

L-glutamate is bound by residues Arg-5–Ser-9 and Glu-41. The 'HIGH' region signature appears at Pro-8–Asn-18. Positions 105, 107, 128, and 132 each coordinate Zn(2+). L-glutamate contacts are provided by Tyr-193 and Arg-211. The 'KMSKS' region signature appears at Arg-249–Arg-253. Lys-252 lines the ATP pocket.

It belongs to the class-I aminoacyl-tRNA synthetase family. GluQ subfamily. Zn(2+) serves as cofactor.

Catalyzes the tRNA-independent activation of glutamate in presence of ATP and the subsequent transfer of glutamate onto a tRNA(Asp). Glutamate is transferred on the 2-amino-5-(4,5-dihydroxy-2-cyclopenten-1-yl) moiety of the queuosine in the wobble position of the QUC anticodon. This Nitratidesulfovibrio vulgaris (strain ATCC 29579 / DSM 644 / CCUG 34227 / NCIMB 8303 / VKM B-1760 / Hildenborough) (Desulfovibrio vulgaris) protein is Glutamyl-Q tRNA(Asp) synthetase.